Reading from the N-terminus, the 315-residue chain is Lipoyl synthase (315 aa).

[4Fe-4S] cluster-binding residues include cysteine 63, cysteine 68, cysteine 74, cysteine 89, cysteine 93, cysteine 96, and serine 303. A Radical SAM core domain is found at 75 to 292; the sequence is FSHGTATFMI…EKKAYDMGFR (218 aa).

Belongs to the radical SAM superfamily. Lipoyl synthase family. The cofactor is [4Fe-4S] cluster.

Its subcellular location is the cytoplasm. The catalysed reaction is [[Fe-S] cluster scaffold protein carrying a second [4Fe-4S](2+) cluster] + N(6)-octanoyl-L-lysyl-[protein] + 2 oxidized [2Fe-2S]-[ferredoxin] + 2 S-adenosyl-L-methionine + 4 H(+) = [[Fe-S] cluster scaffold protein] + N(6)-[(R)-dihydrolipoyl]-L-lysyl-[protein] + 4 Fe(3+) + 2 hydrogen sulfide + 2 5'-deoxyadenosine + 2 L-methionine + 2 reduced [2Fe-2S]-[ferredoxin]. Its pathway is protein modification; protein lipoylation via endogenous pathway; protein N(6)-(lipoyl)lysine from octanoyl-[acyl-carrier-protein]: step 2/2. Its function is as follows. Catalyzes the radical-mediated insertion of two sulfur atoms into the C-6 and C-8 positions of the octanoyl moiety bound to the lipoyl domains of lipoate-dependent enzymes, thereby converting the octanoylated domains into lipoylated derivatives. This chain is Lipoyl synthase, found in Laribacter hongkongensis (strain HLHK9).